A 499-amino-acid polypeptide reads, in one-letter code: Aspartyl/glutamyl-tRNA(Asn/Gln) amidotransferase subunit B (499 aa).

The protein belongs to the GatB/GatE family. GatB subfamily. Heterotrimer of A, B and C subunits.

It carries out the reaction L-glutamyl-tRNA(Gln) + L-glutamine + ATP + H2O = L-glutaminyl-tRNA(Gln) + L-glutamate + ADP + phosphate + H(+). The enzyme catalyses L-aspartyl-tRNA(Asn) + L-glutamine + ATP + H2O = L-asparaginyl-tRNA(Asn) + L-glutamate + ADP + phosphate + 2 H(+). Its function is as follows. Allows the formation of correctly charged Asn-tRNA(Asn) or Gln-tRNA(Gln) through the transamidation of misacylated Asp-tRNA(Asn) or Glu-tRNA(Gln) in organisms which lack either or both of asparaginyl-tRNA or glutaminyl-tRNA synthetases. The reaction takes place in the presence of glutamine and ATP through an activated phospho-Asp-tRNA(Asn) or phospho-Glu-tRNA(Gln). The chain is Aspartyl/glutamyl-tRNA(Asn/Gln) amidotransferase subunit B from Bifidobacterium longum (strain DJO10A).